A 500-amino-acid chain; its full sequence is Aldehyde dehydrogenase (500 aa).

Residue 246–251 (GSTLVG) coordinates NAD(+). The Proton acceptor role is filled by Glu-269. Catalysis depends on Cys-303, which acts as the Nucleophile.

This sequence belongs to the aldehyde dehydrogenase family.

It carries out the reaction an aldehyde + NAD(+) + H2O = a carboxylate + NADH + 2 H(+). The protein operates within alcohol metabolism; ethanol degradation; acetate from ethanol: step 2/2. This is Aldehyde dehydrogenase (aldA) from Agaricus bisporus (White button mushroom).